Reading from the N-terminus, the 603-residue chain is Putative lipase atg15 (603 aa).

At 1-20 the chain is on the cytoplasmic side; it reads MDQPHRRTRKWHLMDLSVST. The chain crosses the membrane as a helical; Signal-anchor for type II membrane protein span at residues 21-41; the sequence is LLMSLALVLPSCVSAYQPVYF. Topologically, residues 42 to 603 are lumenal; the sequence is RSQEATPFIP…ITPAPILIDL (562 aa). N-linked (GlcNAc...) asparagine glycosylation is found at Asn-166, Asn-201, Asn-223, Asn-281, and Asn-305. Catalysis depends on Ser-321, which acts as the Charge relay system. An N-linked (GlcNAc...) asparagine glycan is attached at Asn-467.

The protein belongs to the AB hydrolase superfamily. Lipase family. Binds to both phosphatidylinositol (PI) and phosphatidylinositol 3,5-bisphosphate (PIP2).

It localises to the endosome. The protein resides in the multivesicular body membrane. The protein localises to the prevacuolar compartment membrane. It carries out the reaction a triacylglycerol + H2O = a diacylglycerol + a fatty acid + H(+). Lipase which is essential for lysis of subvacuolar cytoplasm to vacuole targeted bodies and intravacuolar autophagic bodies. Involved in the lysis of intravacuolar multivesicular body (MVB) vesicles. The intravacuolar membrane disintegration by atg15 is critical to life span extension. The protein is Putative lipase atg15 (atg15) of Emericella nidulans (strain FGSC A4 / ATCC 38163 / CBS 112.46 / NRRL 194 / M139) (Aspergillus nidulans).